Here is a 249-residue protein sequence, read N- to C-terminus: Urease accessory protein UreG (249 aa).

The segment covering 1 to 13 has biased composition (basic and acidic residues); that stretch reads MHLGHEEFQRTDG. Residues 1-34 form a disordered region; it reads MHLGHEEFQRTDGRASTGPADAGPAGAGRAPRIG. Residues 18–33 are compositionally biased toward low complexity; it reads GPADAGPAGAGRAPRI. 37 to 44 contributes to the GTP binding site; the sequence is GPVGSGKT. The segment at 229–249 is disordered; sequence PRGGSYDASDASNASQPLNRM. Polar residues predominate over residues 238–249; the sequence is DASNASQPLNRM.

This sequence belongs to the SIMIBI class G3E GTPase family. UreG subfamily. In terms of assembly, homodimer. UreD, UreF and UreG form a complex that acts as a GTP-hydrolysis-dependent molecular chaperone, activating the urease apoprotein by helping to assemble the nickel containing metallocenter of UreC. The UreE protein probably delivers the nickel.

It is found in the cytoplasm. Facilitates the functional incorporation of the urease nickel metallocenter. This process requires GTP hydrolysis, probably effectuated by UreG. The protein is Urease accessory protein UreG of Frankia casuarinae (strain DSM 45818 / CECT 9043 / HFP020203 / CcI3).